Consider the following 175-residue polypeptide: Protein-export protein SecB (175 aa).

Positions 154 to 175 are disordered; it reads QQGGNNNGSDSGIILPPGTTRQ.

It belongs to the SecB family. As to quaternary structure, homotetramer, a dimer of dimers. One homotetramer interacts with 1 SecA dimer.

It localises to the cytoplasm. In terms of biological role, one of the proteins required for the normal export of preproteins out of the cell cytoplasm. It is a molecular chaperone that binds to a subset of precursor proteins, maintaining them in a translocation-competent state. It also specifically binds to its receptor SecA. The polypeptide is Protein-export protein SecB (Bordetella petrii (strain ATCC BAA-461 / DSM 12804 / CCUG 43448)).